A 376-amino-acid polypeptide reads, in one-letter code: CCA-adding enzyme (376 aa).

Positions 23 and 26 each coordinate ATP. CTP contacts are provided by glycine 23 and arginine 26. The Mg(2+) site is built by glutamate 36 and aspartate 38. Arginine 106, arginine 152, and arginine 155 together coordinate ATP. CTP contacts are provided by arginine 106, arginine 152, and arginine 155.

Belongs to the tRNA nucleotidyltransferase/poly(A) polymerase family. Bacterial CCA-adding enzyme type 2 subfamily. Requires Mg(2+) as cofactor.

The enzyme catalyses a tRNA precursor + 2 CTP + ATP = a tRNA with a 3' CCA end + 3 diphosphate. It carries out the reaction a tRNA with a 3' CCA end + 2 CTP + ATP = a tRNA with a 3' CCACCA end + 3 diphosphate. Catalyzes the addition and repair of the essential 3'-terminal CCA sequence in tRNAs without using a nucleic acid template. Adds these three nucleotides in the order of C, C, and A to the tRNA nucleotide-73, using CTP and ATP as substrates and producing inorganic pyrophosphate. tRNA 3'-terminal CCA addition is required both for tRNA processing and repair. Also involved in tRNA surveillance by mediating tandem CCA addition to generate a CCACCA at the 3' terminus of unstable tRNAs. While stable tRNAs receive only 3'-terminal CCA, unstable tRNAs are marked with CCACCA and rapidly degraded. This Coxiella burnetii (strain RSA 331 / Henzerling II) protein is CCA-adding enzyme.